Here is a 323-residue protein sequence, read N- to C-terminus: Putative divalent cation/proton antiporter TMEM165 (323 aa).

The N-terminal stretch at 1-33 (MAASARGSGRAPTRRLLVLLLLPLLWAPAGVRA) is a signal peptide. Topologically, residues 34-88 (GPEEDLSHRNQEPPAPAQQLQPQPAAVQGLEPARAEKGFTPAAPVHTNREDAATQ) are lumenal. Residues 35-44 (PEEDLSHRNQ) show a composition bias toward basic and acidic residues. The segment at 35 to 60 (PEEDLSHRNQEPPAPAQQLQPQPAAV) is disordered. The segment covering 50-59 (AQQLQPQPAA) has biased composition (low complexity). The chain crosses the membrane as a helical span at residues 89–109 (ANLGFIHAFVAAISVIIVSEL). At 110-126 (GDKTFFIAAIMAMRYNR) the chain is on the cytoplasmic side. The helical transmembrane segment at 127–147 (LTVLAGAMLALALMTCLSVLF) threads the bilayer. Residues 148-151 (GYAT) lie on the Lumenal side of the membrane. The helical transmembrane segment at 152 to 172 (TVIPRVYTYYVSTALFAIFGI) threads the bilayer. Topologically, residues 173–227 (RMLREGLKMSPDEGQEELEEVQAELKKKDEEFQRTKLLNGPDVETGTSTAIPQKK) are cytoplasmic. Residues 184–211 (DEGQEELEEVQAELKKKDEEFQRTKLLN) adopt a coiled-coil conformation. A helical membrane pass occupies residues 228–248 (WLHFISPIFVQALTLTFLAEW). Over 249–266 (GDRSQLTTIVLAAREDPY) the chain is Lumenal. The helical transmembrane segment at 267–287 (GVAVGGTVGHCLCTGLAVIGG) threads the bilayer. Residues 288–298 (RMIAQKISVRT) lie on the Cytoplasmic side of the membrane. A helical transmembrane segment spans residues 299-319 (VTIIGGIVFLAFAFSALFISP). The Lumenal segment spans residues 320–323 (ESGF).

This sequence belongs to the GDT1 family.

It localises to the golgi apparatus membrane. The enzyme catalyses Ca(2+)(in) + n H(+)(out) = Ca(2+)(out) + n H(+)(in). It catalyses the reaction Mn(2+)(in) + n H(+)(out) = Mn(2+)(out) + n H(+)(in). Putative divalent cation:proton antiporter that exchanges calcium or manganese ions for protons across the Golgi membrane. Mediates the reversible transport of calcium or manganese to the Golgi lumen driven by the proton gradient and possibly the membrane potential generated by V-ATPase. Provides calcium or manganese cofactors to resident Golgi enzymes and contributes to the maintenance of an acidic luminal Golgi pH required for proper functioning of the secretory pathway. Promotes Ca(2+) storage within the Golgi lumen of the mammary epithelial cells to be then secreted into milk. The transport mechanism and stoichiometry remains to be elucidated. In Rattus norvegicus (Rat), this protein is Putative divalent cation/proton antiporter TMEM165.